A 54-amino-acid chain; its full sequence is Light-harvesting protein B-800/850 alpha chain (54 aa).

At 1 to 14 (MTNGKIWLVVKPTV) the chain is on the cytoplasmic side. A helical transmembrane segment spans residues 15-35 (GVPLFLSAAVIASVVIHAAVL). Histidine 31 contributes to the a bacteriochlorophyll binding site. Residues 36 to 54 (TTTTWLPAYYQGSAAVAAE) lie on the Periplasmic side of the membrane.

It belongs to the antenna complex alpha subunit family. The core complex is formed by different alpha and beta chains, binding bacteriochlorophyll molecules, and arranged most probably in tetrameric structures disposed around the reaction center. The non-pigmented gamma chains may constitute additional components.

It is found in the cell inner membrane. Its function is as follows. Antenna complexes are light-harvesting systems, which transfer the excitation energy to the reaction centers. In Cereibacter sphaeroides (Rhodobacter sphaeroides), this protein is Light-harvesting protein B-800/850 alpha chain (pucA).